Here is a 538-residue protein sequence, read N- to C-terminus: Phosphoenolpyruvate carboxykinase (ATP) (538 aa).

Substrate is bound by residues arginine 61, tyrosine 195, and lysine 201. Residues lysine 201, histidine 220, and 236 to 244 (GLSGTGKTT) each bind ATP. Mn(2+) is bound by residues lysine 201 and histidine 220. Aspartate 257 serves as a coordination point for Mn(2+). ATP is bound by residues glutamate 285, arginine 323, and threonine 449. Residue arginine 323 participates in substrate binding.

Belongs to the phosphoenolpyruvate carboxykinase (ATP) family. The cofactor is Mn(2+).

The protein localises to the cytoplasm. It carries out the reaction oxaloacetate + ATP = phosphoenolpyruvate + ADP + CO2. It functions in the pathway carbohydrate biosynthesis; gluconeogenesis. In terms of biological role, involved in the gluconeogenesis. Catalyzes the conversion of oxaloacetate (OAA) to phosphoenolpyruvate (PEP) through direct phosphoryl transfer between the nucleoside triphosphate and OAA. This Nitrobacter hamburgensis (strain DSM 10229 / NCIMB 13809 / X14) protein is Phosphoenolpyruvate carboxykinase (ATP).